The following is a 505-amino-acid chain: Deoxyguanosinetriphosphate triphosphohydrolase (505 aa).

Positions 66 to 273 (RLTHSMEVQQ…MEAADDISYC (208 aa)) constitute an HD domain.

Belongs to the dGTPase family. Type 1 subfamily. Homotetramer. Mg(2+) serves as cofactor.

It carries out the reaction dGTP + H2O = 2'-deoxyguanosine + triphosphate + H(+). DGTPase preferentially hydrolyzes dGTP over the other canonical NTPs. The polypeptide is Deoxyguanosinetriphosphate triphosphohydrolase (Salmonella typhimurium (strain LT2 / SGSC1412 / ATCC 700720)).